Consider the following 497-residue polypeptide: Delayed-rectifier potassium channel regulatory subunit KCNS1 (497 aa).

Topologically, residues 1–186 (MVSEFPGPGS…LTMENPGYSL (186 aa)) are cytoplasmic. The chain crosses the membrane as a helical span at residues 187 to 208 (PSKLFSCVSIGVVLASIAAMCI). At 209–239 (HSLPEYQAREAAAAVAAVAAGRSAEDVRDDP) the chain is on the extracellular side. Residues 240-262 (VLRRLEYFCIAWFSFEVSSRLLL) form a helical membrane-spanning segment. The Cytoplasmic segment spans residues 263 to 273 (APSTRNFFCHP). The helical transmembrane segment at 274–291 (LNLIDIVSVLPFYLTLLA) threads the bilayer. Residues 292-309 (GAALGDRRGASGEELGDL) are Extracellular-facing. The chain crosses the membrane as a helical; Voltage-sensor span at residues 310-330 (GKVVQVFRLMRIFRVLKLARH). The Cytoplasmic portion of the chain corresponds to 331–345 (STGLRSLGATLKHSY). A helical transmembrane segment spans residues 346 to 367 (REVGILLLYLAVGVSVFSGVAY). The Extracellular portion of the chain corresponds to 368-379 (TAEEKNVGFDTI). An intramembrane region (helical) is located at residues 380–391 (PACWWWGTVSMT). The short motif at 392–397 (TVGYGD) is the Selectivity filter element. Residues 392–399 (TVGYGDVV) lie within the membrane without spanning it. At 400-406 (PETVAGK) the chain is on the extracellular side. A helical transmembrane segment spans residues 407–435 (LAASGCILGGILVVALPITIIFNKFSHFY). At 436–497 (RRQKALEAAV…PSEPAKSHSY (62 aa)) the chain is on the cytoplasmic side. The tract at residues 464–497 (SDVSLETSRETSQEGRSTDLETQAPSEPAKSHSY) is disordered. Positions 470 to 482 (TSRETSQEGRSTD) are enriched in basic and acidic residues.

The protein belongs to the potassium channel family. S (TC 1.A.1.2) subfamily. Kv9.1/KCNS1 sub-subfamily. In terms of assembly, heterotetramer with KCNB1. Heterotetramer with KCNB2. Does not form homomultimers. In terms of tissue distribution, highly expressed in brain, but not in the other tissues tested.

Its subcellular location is the cell membrane. Its function is as follows. Potassium channel regulatory subunit that modulate the delayed rectifier voltage-gated potassium channel activity of KCNB1 and KCNB2 by altering their kinetics, expression levels, and shifting the half-inactivation potential to more polarized values. While it does not form functional channels on its own, it can form functional heterotetrameric channels with KCNB1 and KCNB2. Each regulatory subunit has unique regulatory properties that can lead to extensive inhibition, significant changes in kinetics, and/or substantial shifts in the voltage dependencies of the inactivation process. In Rattus norvegicus (Rat), this protein is Delayed-rectifier potassium channel regulatory subunit KCNS1.